We begin with the raw amino-acid sequence, 366 residues long: Flagellar P-ring protein (366 aa).

Residues 1–19 form the signal peptide; the sequence is MTLIRLLACLLFLPCLAQA.

Belongs to the FlgI family. As to quaternary structure, the basal body constitutes a major portion of the flagellar organelle and consists of four rings (L,P,S, and M) mounted on a central rod.

The protein resides in the periplasm. Its subcellular location is the bacterial flagellum basal body. In terms of biological role, assembles around the rod to form the L-ring and probably protects the motor/basal body from shearing forces during rotation. The chain is Flagellar P-ring protein from Ruegeria pomeroyi (strain ATCC 700808 / DSM 15171 / DSS-3) (Silicibacter pomeroyi).